A 356-amino-acid polypeptide reads, in one-letter code: Protein-arginine kinase (356 aa).

One can recognise a Phosphagen kinase C-terminal domain in the interval 22–249 (FRPISTLSLS…SKILSAETEA (228 aa)). ATP is bound by residues 25 to 29 (ISTLS), 172 to 176 (VARAF), and 202 to 207 (SSLLPL).

The protein belongs to the ATP:guanido phosphotransferase family.

It carries out the reaction L-arginyl-[protein] + ATP = N(omega)-phospho-L-arginyl-[protein] + ADP + H(+). Its function is as follows. Catalyzes the specific phosphorylation of arginine residues in proteins. This Chlamydia muridarum (strain MoPn / Nigg) protein is Protein-arginine kinase.